The following is an 863-amino-acid chain: Dynamin-3 (863 aa).

The Dynamin-type G domain occupies 28–294 (LLELPQIAVV…LTNHIRDTLP (267 aa)). The segment at 38–45 (GGQSAGKS) is G1 motif. Residue 38 to 46 (GGQSAGKSS) participates in GTP binding. Residues 64 to 66 (VTR) form a G2 motif region. Residues 136-139 (DLPG) are G3 motif. The interval 205–208 (TKLD) is G4 motif. GTP is bound at residue 205 to 211 (TKLDLMD). Tyr-231 carries the post-translational modification Phosphotyrosine. The tract at residues 235–238 (VNRS) is G5 motif. 236–239 (NRSQ) lines the GTP pocket. Residue Lys-299 is modified to N6-acetyllysine. The PH domain occupies 515-621 (QVIRKGWLTV…WKASLLRAGV (107 aa)). The residue at position 593 (Tyr-593) is a Phosphotyrosine. Lys-594 is subject to N6-acetyllysine. Disordered stretches follow at residues 626 to 647 (SVGS…SMDP) and 742 to 863 (ATVS…SLLD). Polar residues predominate over residues 627–642 (VGSNKTENDENGQAEN). In terms of domain architecture, GED spans 653-744 (VETIRNLVDS…IIGDINTATV (92 aa)). Ser-763 and Ser-767 each carry phosphoserine. Pro residues-rich tracts occupy residues 791 to 816 (PAIP…PPFP) and 826 to 849 (PQVP…PSPT). Phosphoserine is present on Ser-847.

This sequence belongs to the TRAFAC class dynamin-like GTPase superfamily. Dynamin/Fzo/YdjA family.

It localises to the cytoplasm. It is found in the cytoskeleton. It catalyses the reaction GTP + H2O = GDP + phosphate + H(+). Microtubule-associated force-producing protein involved in producing microtubule bundles and able to bind and hydrolyze GTP. Most probably involved in vesicular trafficking processes, in particular endocytosis. The polypeptide is Dynamin-3 (Dnm3) (Mus musculus (Mouse)).